A 118-amino-acid chain; its full sequence is NADH-ubiquinone oxidoreductase chain 3 (118 aa).

3 helical membrane-spanning segments follow: residues methionine 1–phenylalanine 21, tyrosine 59–leucine 79, and valine 86–leucine 106.

This sequence belongs to the complex I subunit 3 family.

The protein localises to the mitochondrion membrane. The catalysed reaction is a ubiquinone + NADH + 5 H(+)(in) = a ubiquinol + NAD(+) + 4 H(+)(out). Core subunit of the mitochondrial membrane respiratory chain NADH dehydrogenase (Complex I) that is believed to belong to the minimal assembly required for catalysis. Complex I functions in the transfer of electrons from NADH to the respiratory chain. The immediate electron acceptor for the enzyme is believed to be ubiquinone. The sequence is that of NADH-ubiquinone oxidoreductase chain 3 (ND3) from Fasciola hepatica (Liver fluke).